The sequence spans 695 residues: WD repeat-containing protein 93 (695 aa).

Residues 1-35 (MSSFKGNQAQKRRLSVFPKGPLEIPSPTEADWPKD) form a disordered region. The WD repeat unit spans residues 421–460 (PCAAPIVMSQISSFSSYLALVCEDGVLILWDLAEGFLFGV).

In terms of tissue distribution, testis-specific. Expressed in spermatogonia, spermatocytes and spermatids.

In Mus musculus (Mouse), this protein is WD repeat-containing protein 93 (Wdr93).